The chain runs to 1048 residues: Histone deacetylase complex subunit SAP130 (1048 aa).

The disordered stretch occupies residues 1–95; it reads MGPPRHPQAG…LQSREEKQEP (95 aa). Residues 40-54 show a composition bias toward polar residues; it reads TGLSQAPSQIANSGS. A compositionally biased stretch (basic and acidic residues) spans 67–80; that stretch reads ESGRDSEVSAREHM. Residue R232 is modified to Omega-N-methylarginine. Phosphothreonine is present on T355. Phosphoserine occurs at positions 442 and 465. Disordered regions lie at residues 458–477, 576–617, and 649–687; these read PISG…RSDN, IGTP…PEGK, and QTHS…SEIH. 2 stretches are compositionally biased toward polar residues: residues 590–613 and 649–667; these read GIHS…QQPQ and QTHS…SSPR. Residue K785 forms a Glycyl lysine isopeptide (Lys-Gly) (interchain with G-Cter in SUMO2) linkage. The interval 819–871 is disordered; sequence LSMPTSDLPPGASPRKKPRKQQHVISTEEGDMMETNSTDDEKSTAKSLLVKAE. The interval 836 to 1047 is interactions with SIN3A and HDAC1; sequence PRKQQHVIST…KVSKLKRKEK (212 aa). S855 is modified (phosphoserine). T856 is modified (phosphothreonine). Glycyl lysine isopeptide (Lys-Gly) (interchain with G-Cter in SUMO2) cross-links involve residues K864 and K869. S875 carries the post-translational modification Phosphoserine.

It belongs to the SAP130 family. In terms of assembly, component of a mSin3A corepressor complex that contains SIN3A, SAP130, SUDS3/SAP45, ARID4B/SAP180, HDAC1 and HDAC2. Interacts (released by dead or dying cells) with CLEC4E. Acetylated. In terms of processing, sumoylated with SUMO1. In terms of tissue distribution, expressed in various cancer cell ines.

Its subcellular location is the nucleus. Its function is as follows. Acts as a transcriptional repressor. May function in the assembly and/or enzymatic activity of the mSin3A corepressor complex or in mediating interactions between the complex and other regulatory complexes. The polypeptide is Histone deacetylase complex subunit SAP130 (SAP130) (Homo sapiens (Human)).